The primary structure comprises 106 residues: Putative toxin Rv3098A/RVBD_3098A (106 aa).

This sequence belongs to the PemK/MazF family. As to quaternary structure, forms a complex with cognate antitoxin Rv3098B/RVBD_3098B.

Putative toxic component of a possible type II toxin-antitoxin (TA) system. Its toxic effect may be neutralized by cognate antitoxin Rv3098B/RVBD_3098B. The protein is Putative toxin Rv3098A/RVBD_3098A of Mycobacterium tuberculosis (strain ATCC 25618 / H37Rv).